We begin with the raw amino-acid sequence, 74 residues long: Protein krueppel (74 aa).

4 consecutive C2H2-type zinc fingers follow at residues 1 to 4, 10 to 32, 38 to 60, and 66 to 74; these read ERTH, FECS…MRLH, YHCT…LRVH, and YACELCASR.

This sequence belongs to the krueppel C2H2-type zinc-finger protein family.

It is found in the nucleus. Functionally, krueppel is a gap class segmentation protein. The protein is Protein krueppel (Kr) of Euscelis plebejus (Leafhopper).